Reading from the N-terminus, the 278-residue chain is Large ribosomal subunit protein uL24m (278 aa).

The KOW domain maps to 109–142; that stretch reads FFPGDLVQVMVGKDKGRQGLVLTTSRDSSDVIVD.

Belongs to the universal ribosomal protein uL24 family.

The protein localises to the mitochondrion. This Caenorhabditis elegans protein is Large ribosomal subunit protein uL24m (mrpl-24).